We begin with the raw amino-acid sequence, 109 residues long: Flagellar hook-basal body complex protein FliE (109 aa).

Belongs to the FliE family.

It is found in the bacterial flagellum basal body. The chain is Flagellar hook-basal body complex protein FliE from Pseudomonas savastanoi pv. phaseolicola (strain 1448A / Race 6) (Pseudomonas syringae pv. phaseolicola (strain 1448A / Race 6)).